The sequence spans 599 residues: MSEAAGNLNSLRLANVALREELNALRGENVQLGLQLGRALAEVNSLRGNVSSYIRWPMPIVPVLAEENFEFLLNETDPTPEEEEEEEEEVPFLCWPPPRTDPEYVSDDLLINVVQDYTNPDGSSDPPLSPSPSQPELHSPMLKEPTFEFLLPPLERPDIEPFSGDPVYLAEFLMQLETFIADHEDHFPGGAERVAFLISFFTGEARDWAISVTQEGSSLHANFPRFLDEIRKEFCGPIPSRVAKKAIRKLKQGNCTLGSYADAFQFLAQFLSWDDCRLQNQFLKGLSEIFRKELLWSTEVADLDELILECVKIERKVRVPKTASLTGVQNSCCPFALIPNEDENEGVEFYSENEGEGEEAGGYRLYLKDQRQHMTAFPQEMREEEEEMRKEEDEMEDEEDEDEDEDYEFEEEDEDDDDEEEEEEEEEEEDKEEEMKNEDSDENKYEEEDEVIVRVLEPEQEQEREEIEHEHVYVHEHIHAHVHTLAAHHHGLHGELMVMDEPVLVDTSTQTISSAIGYHAENYLGVSPSVMHSSRQRSQNRVPLLEGLPGTNSSFYSPPPLMRHAGRLGQRQMRRCPSVLFCLTPRQGGHRATQGRIRV.

Disordered stretches follow at residues D77–P97, D116–S139, and F377–E450. The segment covering P78–V90 has biased composition (acidic residues). Acidic residues-rich tracts occupy residues D393–E432 and D439–E450.

This Mus musculus (Mouse) protein is Retrotransposon Gag-like protein 5.